We begin with the raw amino-acid sequence, 1383 residues long: DNA-directed RNA polymerase subunit beta'' (1383 aa).

Residues Cys-220, Cys-289, Cys-296, and Cys-299 each coordinate Zn(2+).

The protein belongs to the RNA polymerase beta' chain family. RpoC2 subfamily. In terms of assembly, in plastids the minimal PEP RNA polymerase catalytic core is composed of four subunits: alpha, beta, beta', and beta''. When a (nuclear-encoded) sigma factor is associated with the core the holoenzyme is formed, which can initiate transcription. Zn(2+) serves as cofactor.

It localises to the plastid. The protein resides in the chloroplast. The catalysed reaction is RNA(n) + a ribonucleoside 5'-triphosphate = RNA(n+1) + diphosphate. Functionally, DNA-dependent RNA polymerase catalyzes the transcription of DNA into RNA using the four ribonucleoside triphosphates as substrates. This is DNA-directed RNA polymerase subunit beta'' from Oenothera parviflora (Small-flowered evening primrose).